The sequence spans 435 residues: Glucoside xylosyltransferase 1 (435 aa).

At 1–6 (MRRYLR) the chain is on the cytoplasmic side. A helical; Signal-anchor for type II membrane protein transmembrane segment spans residues 7-29 (VVGLCLACGFCSLLYAFSQLAVS). The Lumenal portion of the chain corresponds to 30 to 435 (LEEGAAVGRR…NRYDTPPKER (406 aa)). Asparagine 168 and asparagine 232 each carry an N-linked (GlcNAc...) asparagine glycan.

It belongs to the glycosyltransferase 8 family.

Its subcellular location is the membrane. It carries out the reaction 3-O-(beta-D-glucosyl)-L-seryl-[EGF-like domain protein] + UDP-alpha-D-xylose = 3-O-[alpha-D-xylosyl-(1-&gt;3)-beta-D-glucosyl]-L-seryl-[EGF-like domain protein] + UDP + H(+). In terms of biological role, glycosyltransferase which elongates the O-linked glucose attached to EGF-like repeats in the extracellular domain of Notch proteins by catalyzing the addition of xylose. The chain is Glucoside xylosyltransferase 1 (Gxylt1) from Rattus norvegicus (Rat).